The chain runs to 72 residues: ADVPGNYPLNTYGNMYYCTILGENEFCRKVCKVHGVKYGYCFNSHCWCEYLEAKDVSVWNAAKNYCKNPVGK.

Residues valine 3–lysine 67 enclose the LCN-type CS-alpha/beta domain. 3 disulfides stabilise this stretch: cysteine 18-cysteine 41, cysteine 27-cysteine 46, and cysteine 31-cysteine 48.

The protein belongs to the long (3 C-C) scorpion toxin superfamily. Sodium channel inhibitor family. Beta subfamily. In terms of tissue distribution, expressed by the venom gland.

It is found in the secreted. Binds to sodium channels (Nav) and affects the channel activation process. This Androctonus crassicauda (Arabian fat-tailed scorpion) protein is Toxin Acra II-1.